The chain runs to 1438 residues: DNA polymerase III PolC-type (1438 aa).

The 157-residue stretch at 422–578 (YVVFDVETTG…YDTEATAYIF (157 aa)) folds into the Exonuclease domain.

This sequence belongs to the DNA polymerase type-C family. PolC subfamily.

It localises to the cytoplasm. The enzyme catalyses DNA(n) + a 2'-deoxyribonucleoside 5'-triphosphate = DNA(n+1) + diphosphate. Functionally, required for replicative DNA synthesis. This DNA polymerase also exhibits 3' to 5' exonuclease activity. This Staphylococcus aureus (strain bovine RF122 / ET3-1) protein is DNA polymerase III PolC-type.